The following is a 173-amino-acid chain: Crossover junction endodeoxyribonuclease RuvC (173 aa).

Residues D11, E71, and D143 contribute to the active site. The Mg(2+) site is built by D11, E71, and D143.

It belongs to the RuvC family. As to quaternary structure, homodimer which binds Holliday junction (HJ) DNA. The HJ becomes 2-fold symmetrical on binding to RuvC with unstacked arms; it has a different conformation from HJ DNA in complex with RuvA. In the full resolvosome a probable DNA-RuvA(4)-RuvB(12)-RuvC(2) complex forms which resolves the HJ. The cofactor is Mg(2+).

It localises to the cytoplasm. It carries out the reaction Endonucleolytic cleavage at a junction such as a reciprocal single-stranded crossover between two homologous DNA duplexes (Holliday junction).. Its function is as follows. The RuvA-RuvB-RuvC complex processes Holliday junction (HJ) DNA during genetic recombination and DNA repair. Endonuclease that resolves HJ intermediates. Cleaves cruciform DNA by making single-stranded nicks across the HJ at symmetrical positions within the homologous arms, yielding a 5'-phosphate and a 3'-hydroxyl group; requires a central core of homology in the junction. The consensus cleavage sequence is 5'-(A/T)TT(C/G)-3'. Cleavage occurs on the 3'-side of the TT dinucleotide at the point of strand exchange. HJ branch migration catalyzed by RuvA-RuvB allows RuvC to scan DNA until it finds its consensus sequence, where it cleaves and resolves the cruciform DNA. This is Crossover junction endodeoxyribonuclease RuvC from Brucella suis (strain ATCC 23445 / NCTC 10510).